A 257-amino-acid chain; its full sequence is S-methyl-5'-thioadenosine phosphorylase (257 aa).

Residues serine 10 and 50–51 each bind phosphate; that span reads RH. A substrate-binding site is contributed by methionine 180. Position 181 (threonine 181) interacts with phosphate. 204 to 206 lines the substrate pocket; it reads DYD.

The protein belongs to the PNP/MTAP phosphorylase family. MTAP subfamily. Homohexamer. Dimer of a homotrimer.

The catalysed reaction is S-methyl-5'-thioadenosine + phosphate = 5-(methylsulfanyl)-alpha-D-ribose 1-phosphate + adenine. Its pathway is amino-acid biosynthesis; L-methionine biosynthesis via salvage pathway; S-methyl-5-thio-alpha-D-ribose 1-phosphate from S-methyl-5'-thioadenosine (phosphorylase route): step 1/1. Catalyzes the reversible phosphorylation of S-methyl-5'-thioadenosine (MTA) to adenine and 5-methylthioribose-1-phosphate. Involved in the breakdown of MTA, a major by-product of polyamine biosynthesis. Responsible for the first step in the methionine salvage pathway after MTA has been generated from S-adenosylmethionine. Has broad substrate specificity with 6-aminopurine nucleosides as preferred substrates. This Pyrococcus horikoshii (strain ATCC 700860 / DSM 12428 / JCM 9974 / NBRC 100139 / OT-3) protein is S-methyl-5'-thioadenosine phosphorylase.